Here is a 593-residue protein sequence, read N- to C-terminus: Solute carrier family 40 member 3, chloroplastic (593 aa).

The segment at 1–23 (MSMSKLLSPPPTSPPGPALSRLP) is disordered. The transit peptide at 1-51 (MSMSKLLSPPPTSPPGPALSRLPCRRVAPPPVLPFPFPLRRLTSRRVFATS) directs the protein to the chloroplast. A compositionally biased stretch (pro residues) spans 8 to 17 (SPPPTSPPGP). Transmembrane regions (helical) follow at residues 181 to 201 (ILPV…AGPL), 219 to 239 (AAIQ…AFAV), 253 to 273 (FAVL…LGII), 303 to 322 (LLCE…KNNP), 323 to 343 (LTCI…LIFL), 403 to 423 (YVFV…TFLI), 431 to 451 (VIGA…FATA), 462 to 482 (AGAA…VVYL), 493 to 513 (LFAF…YSAI), 530 to 550 (IGAT…AVAV), and 557 to 577 (HFGA…GMYC).

The protein belongs to the ferroportin (FP) (TC 2.A.100) family. SLC40A subfamily.

It is found in the membrane. The protein resides in the plastid. Its subcellular location is the chloroplast envelope. In terms of biological role, may be involved in iron transport and iron homeostasis. This chain is Solute carrier family 40 member 3, chloroplastic, found in Oryza sativa subsp. japonica (Rice).